Reading from the N-terminus, the 312-residue chain is Probable HTH-type transcriptional regulator LrhA (312 aa).

The HTH lysR-type domain occupies 11 to 68 (LDLDLLRTFVAVADLNTFAAAAAAVCRTQSAVSQQMQRLEQLVGKELFARHGRNKLLT). Positions 28 to 47 (FAAAAAAVCRTQSAVSQQMQ) form a DNA-binding region, H-T-H motif.

It belongs to the LysR transcriptional regulatory family.

Functionally, not known, does not seem to act on the proton translocating NADH dehydrogenase genes (nuoA-N) which are part of the lrhA operon. This chain is Probable HTH-type transcriptional regulator LrhA (lrhA), found in Escherichia coli (strain K12).